Here is a 391-residue protein sequence, read N- to C-terminus: Ferrochelatase (391 aa).

The Fe cation site is built by histidine 196 and glutamate 281.

This sequence belongs to the ferrochelatase family.

It is found in the cytoplasm. It catalyses the reaction heme b + 2 H(+) = protoporphyrin IX + Fe(2+). It functions in the pathway porphyrin-containing compound metabolism; protoheme biosynthesis; protoheme from protoporphyrin-IX: step 1/1. Catalyzes the ferrous insertion into protoporphyrin IX. This is Ferrochelatase from Prochlorococcus marinus (strain NATL2A).